Here is a 357-residue protein sequence, read N- to C-terminus: Geranylgeranyl pyrophosphate synthase, chloroplastic (357 aa).

The transit peptide at 1–40 (MRSNLCHPLKNQLPISFFLSGTIRKPIFSCSRLSISAIIT) directs the protein to the chloroplast. Residues Lys106, Arg109, and His138 each contribute to the isopentenyl diphosphate site. Positions 145 and 151 each coordinate Mg(2+). Residue Arg156 coordinates dimethylallyl diphosphate. An isopentenyl diphosphate-binding site is contributed by Arg157. Residues Lys242, Thr243, Gln280, Lys297, and Lys307 each contribute to the dimethylallyl diphosphate site.

The protein belongs to the FPP/GGPP synthase family. The cofactor is Mg(2+).

The protein resides in the plastid. Its subcellular location is the chloroplast. The catalysed reaction is isopentenyl diphosphate + dimethylallyl diphosphate = (2E)-geranyl diphosphate + diphosphate. It carries out the reaction isopentenyl diphosphate + (2E)-geranyl diphosphate = (2E,6E)-farnesyl diphosphate + diphosphate. The enzyme catalyses isopentenyl diphosphate + (2E,6E)-farnesyl diphosphate = (2E,6E,10E)-geranylgeranyl diphosphate + diphosphate. It participates in isoprenoid biosynthesis; farnesyl diphosphate biosynthesis; farnesyl diphosphate from geranyl diphosphate and isopentenyl diphosphate: step 1/1. Its pathway is isoprenoid biosynthesis; geranyl diphosphate biosynthesis; geranyl diphosphate from dimethylallyl diphosphate and isopentenyl diphosphate: step 1/1. The protein operates within isoprenoid biosynthesis; geranylgeranyl diphosphate biosynthesis; geranylgeranyl diphosphate from farnesyl diphosphate and isopentenyl diphosphate: step 1/1. Its function is as follows. Catalyzes the trans-addition of the three molecules of IPP onto DMAPP to form geranylgeranyl pyrophosphate. The sequence is that of Geranylgeranyl pyrophosphate synthase, chloroplastic (GGPS1) from Catharanthus roseus (Madagascar periwinkle).